Here is a 414-residue protein sequence, read N- to C-terminus: Esterase FrsA (414 aa).

Belongs to the FrsA family.

It carries out the reaction a carboxylic ester + H2O = an alcohol + a carboxylate + H(+). Catalyzes the hydrolysis of esters. The polypeptide is Esterase FrsA (Shigella boydii serotype 18 (strain CDC 3083-94 / BS512)).